A 165-amino-acid chain; its full sequence is Phosphopantetheine adenylyltransferase (165 aa).

Thr10 provides a ligand contact to substrate. Residues 10–11 (TF) and His18 contribute to the ATP site. Substrate-binding residues include Lys42, Leu74, and Arg88. ATP is bound by residues 89–91 (GLR), Glu99, and 124–130 (NAFISSS).

It belongs to the bacterial CoaD family. Homohexamer. Requires Mg(2+) as cofactor.

The protein resides in the cytoplasm. It carries out the reaction (R)-4'-phosphopantetheine + ATP + H(+) = 3'-dephospho-CoA + diphosphate. It participates in cofactor biosynthesis; coenzyme A biosynthesis; CoA from (R)-pantothenate: step 4/5. Its function is as follows. Reversibly transfers an adenylyl group from ATP to 4'-phosphopantetheine, yielding dephospho-CoA (dPCoA) and pyrophosphate. The polypeptide is Phosphopantetheine adenylyltransferase (Helicobacter hepaticus (strain ATCC 51449 / 3B1)).